The primary structure comprises 422 residues: 4-hydroxy-3-methylbut-2-en-1-yl diphosphate synthase (flavodoxin) (422 aa).

[4Fe-4S] cluster is bound by residues cysteine 316, cysteine 319, cysteine 362, and glutamate 369.

Belongs to the IspG family. The cofactor is [4Fe-4S] cluster.

The catalysed reaction is (2E)-4-hydroxy-3-methylbut-2-enyl diphosphate + oxidized [flavodoxin] + H2O + 2 H(+) = 2-C-methyl-D-erythritol 2,4-cyclic diphosphate + reduced [flavodoxin]. It functions in the pathway isoprenoid biosynthesis; isopentenyl diphosphate biosynthesis via DXP pathway; isopentenyl diphosphate from 1-deoxy-D-xylulose 5-phosphate: step 5/6. In terms of biological role, converts 2C-methyl-D-erythritol 2,4-cyclodiphosphate (ME-2,4cPP) into 1-hydroxy-2-methyl-2-(E)-butenyl 4-diphosphate. This chain is 4-hydroxy-3-methylbut-2-en-1-yl diphosphate synthase (flavodoxin), found in Ehrlichia ruminantium (strain Welgevonden).